Reading from the N-terminus, the 139-residue chain is ATP synthase epsilon chain (139 aa).

It belongs to the ATPase epsilon chain family. F-type ATPases have 2 components, CF(1) - the catalytic core - and CF(0) - the membrane proton channel. CF(1) has five subunits: alpha(3), beta(3), gamma(1), delta(1), epsilon(1). CF(0) has three main subunits: a, b and c.

It localises to the cell membrane. Its function is as follows. Produces ATP from ADP in the presence of a proton gradient across the membrane. In Enterococcus faecalis (strain ATCC 700802 / V583), this protein is ATP synthase epsilon chain.